The primary structure comprises 138 residues: ATP synthase epsilon chain (138 aa).

The protein belongs to the ATPase epsilon chain family. F-type ATPases have 2 components, CF(1) - the catalytic core - and CF(0) - the membrane proton channel. CF(1) has five subunits: alpha(3), beta(3), gamma(1), delta(1), epsilon(1). CF(0) has three main subunits: a, b and c.

Its subcellular location is the cell inner membrane. Produces ATP from ADP in the presence of a proton gradient across the membrane. The polypeptide is ATP synthase epsilon chain (Psychrobacter sp. (strain PRwf-1)).